Consider the following 329-residue polypeptide: Peroxidase 50 (329 aa).

A signal peptide spans 1–25 (MVVVNKTNLLLLLLSLCLTLDLSSA). Intrachain disulfides connect Cys-36–Cys-119, Cys-69–Cys-74, Cys-125–Cys-325, and Cys-204–Cys-236. The active-site Proton acceptor is the His-67. Ca(2+) contacts are provided by Asp-68, Val-71, Gly-73, Asp-75, and Ser-77. Residue Pro-167 coordinates substrate. A heme b-binding site is contributed by His-197. Thr-198 contacts Ca(2+). A glycan (N-linked (GlcNAc...) asparagine) is linked at Asn-215. Residues Asp-249, Thr-252, and Asp-257 each contribute to the Ca(2+) site.

Belongs to the peroxidase family. Classical plant (class III) peroxidase subfamily. The cofactor is heme b. Requires Ca(2+) as cofactor. Expressed in roots and leaves.

The protein localises to the secreted. The catalysed reaction is 2 a phenolic donor + H2O2 = 2 a phenolic radical donor + 2 H2O. Removal of H(2)O(2), oxidation of toxic reductants, biosynthesis and degradation of lignin, suberization, auxin catabolism, response to environmental stresses such as wounding, pathogen attack and oxidative stress. These functions might be dependent on each isozyme/isoform in each plant tissue. Its function is as follows. Exhibits a Ca(2+)-pectate binding affinity which could be interpreted in vivo as a specificity to interact with the pectic structure of the cell wall. This Arabidopsis thaliana (Mouse-ear cress) protein is Peroxidase 50 (PER50).